Here is a 247-residue protein sequence, read N- to C-terminus: MAETKNWYNTREAIEKTSPSRLDGINLKEETFQRWSYTSFLQELGQRLNNPQKTIATAIVLCQRFFTRQSLTKNDPKTVAIICMFIAGKVEGSPRPAGDVVFVSYRVLFNKEPLRDVFERLKMTVLTGEKLVLSTLECDLEIEHPYKLVMDWVKRSVKTEDGRRLCQAAFNFVNDSLRTSLCLQFGPSQIASAAIYIGLSMCKMTLPCDGDKAWWREFDVTKRQLWEICDQMLDLYVQDFVVPRHGL.

The protein belongs to the cyclin family. Cyclin T subfamily.

This is Putative cyclin-T1-1 (CYCT1-1) from Arabidopsis thaliana (Mouse-ear cress).